Reading from the N-terminus, the 518-residue chain is Dihydro-ML-236C monooxygenase mlcC (518 aa).

Residues 1-31 (MLGQVLLTVESYQWVSTPQALVAVAVLLSLI) lie on the Cytoplasmic side of the membrane. A helical; Signal-anchor for type II membrane protein membrane pass occupies residues 32-48 (AYRLRGRQSELQVYNPK). The Lumenal segment spans residues 49-518 (KWWELTTMRA…EDIPLPHDRC (470 aa)). A heme-binding site is contributed by Cys-454.

The protein belongs to the cytochrome P450 family. It depends on heme as a cofactor.

It is found in the endoplasmic reticulum membrane. It catalyses the reaction dihydro-ML-236C carboxylate + reduced [NADPH--hemoprotein reductase] + O2 = ML-236C carboxylate + oxidized [NADPH--hemoprotein reductase] + 2 H2O + H(+). The enzyme catalyses ML-236C carboxylate + reduced [NADPH--hemoprotein reductase] + O2 = ML-236A carboxylate + oxidized [NADPH--hemoprotein reductase] + H2O + H(+). It functions in the pathway polyketide biosynthesis. Dihydro-ML-236C carboxylate monooxygenase; part of the gene cluster that mediates the biosynthesis of compactin, also known as mevastatin or ML-236B, and which acts as a potent competitive inhibitor of HMG-CoA reductase. Compactin biosynthesis is performed in two stages. The first stage is catalyzed by the nonaketide synthase mlcA, which belongs to type I polyketide synthases and catalyzes the iterative nine-step formation of the polyketide. This PKS stage is completed by the action of dehydrogenase mlcG, which catalyzes the NADPH-dependent reduction of the unsaturated tetra-, penta- and heptaketide intermediates that arise during the mlcA-mediated biosynthesis of the nonaketide chain and leads to dihydro-ML-236C carboxylate. Covalently bound dihydro-ML-236C carboxylate is released from mlcA by the mlcF esterase. Conversion of dihydro-ML-236C carboxylate into ML-236A carboxylate is subsequently performed with the participation of molecular oxygen and P450 monoogygenase mlcC. Finally, mlcH performs the conversion of ML-236A carboxylate to ML-236B/compactin carboxylate through the addition of the side-chain diketide moiety produced by the diketide synthase mlcB. The sequence is that of Dihydro-ML-236C monooxygenase mlcC from Penicillium citrinum.